A 117-amino-acid polypeptide reads, in one-letter code: Large ribosomal subunit protein bL19 (117 aa).

Belongs to the bacterial ribosomal protein bL19 family.

Its function is as follows. This protein is located at the 30S-50S ribosomal subunit interface and may play a role in the structure and function of the aminoacyl-tRNA binding site. The sequence is that of Large ribosomal subunit protein bL19 from Blochmanniella floridana.